Reading from the N-terminus, the 150-residue chain is MKSINAYTDGSCLGNPGPGGWAVLLRYKNNEKELVGGELDTTNNRMELMAAIMALERLSEPCQIKLHTDSQYVRQGITEWMSGWVRRGWKTAAGDPVKNRDLWERLCAATQRHMVEWCWVKAHNGDSDNERVDVLARGQAMAQRSTVASR.

Residues 1 to 141 (MKSINAYTDG…VDVLARGQAM (141 aa)) enclose the RNase H type-1 domain. 4 residues coordinate Mg(2+): Asp-9, Glu-47, Asp-69, and Asp-133.

Belongs to the RNase H family. Monomer. Mg(2+) serves as cofactor.

Its subcellular location is the cytoplasm. The enzyme catalyses Endonucleolytic cleavage to 5'-phosphomonoester.. In terms of biological role, endonuclease that specifically degrades the RNA of RNA-DNA hybrids. This is Ribonuclease HI from Xylella fastidiosa (strain 9a5c).